The primary structure comprises 418 residues: Aspartate aminotransferase, cytoplasmic (418 aa).

The residue at position 2 (Ser2) is an N-acetylserine. L-aspartate-binding residues include Gly38, Trp135, and Asn188. Lys255 is modified (N6-(pyridoxal phosphate)lysine). An L-aspartate-binding site is contributed by Arg387. At Ser389 the chain carries Phosphoserine.

Belongs to the class-I pyridoxal-phosphate-dependent aminotransferase family. Homodimer. Requires pyridoxal 5'-phosphate as cofactor.

It localises to the cytoplasm. The protein resides in the peroxisome. It catalyses the reaction L-aspartate + 2-oxoglutarate = oxaloacetate + L-glutamate. In terms of biological role, plays a key role in amino acid metabolism. This chain is Aspartate aminotransferase, cytoplasmic (AAT2), found in Saccharomyces cerevisiae (strain ATCC 204508 / S288c) (Baker's yeast).